A 230-amino-acid polypeptide reads, in one-letter code: 6-carboxyhexanoate--CoA ligase (230 aa).

This sequence belongs to the BioW family. As to quaternary structure, homodimer. Mg(2+) serves as cofactor.

The catalysed reaction is heptanedioate + ATP + CoA = 6-carboxyhexanoyl-CoA + AMP + diphosphate. It participates in metabolic intermediate metabolism; pimeloyl-CoA biosynthesis; pimeloyl-CoA from pimelate: step 1/1. Catalyzes the transformation of pimelate into pimeloyl-CoA with concomitant hydrolysis of ATP to AMP. In Staphylococcus aureus (strain MRSA252), this protein is 6-carboxyhexanoate--CoA ligase.